The following is a 469-amino-acid chain: 3-isopropylmalate dehydratase large subunit (469 aa).

[4Fe-4S] cluster-binding residues include Cys347, Cys410, and Cys413.

The protein belongs to the aconitase/IPM isomerase family. LeuC type 1 subfamily. In terms of assembly, heterodimer of LeuC and LeuD. Requires [4Fe-4S] cluster as cofactor.

The catalysed reaction is (2R,3S)-3-isopropylmalate = (2S)-2-isopropylmalate. Its pathway is amino-acid biosynthesis; L-leucine biosynthesis; L-leucine from 3-methyl-2-oxobutanoate: step 2/4. In terms of biological role, catalyzes the isomerization between 2-isopropylmalate and 3-isopropylmalate, via the formation of 2-isopropylmaleate. This chain is 3-isopropylmalate dehydratase large subunit, found in Burkholderia lata (strain ATCC 17760 / DSM 23089 / LMG 22485 / NCIMB 9086 / R18194 / 383).